Consider the following 253-residue polypeptide: CD151 antigen (253 aa).

Topologically, residues 1–18 (MGEFNEKKATCGTVCLKY) are cytoplasmic. Residues C11 and C15 are each lipidated (S-palmitoyl cysteine). The chain crosses the membrane as a helical span at residues 19-39 (LLFTYNCCFWLAGLAVMAVGI). At 40-57 (WTLALKSDYISLLASSTY) the chain is on the extracellular side. The helical transmembrane segment at 58 to 78 (LATAYILVVAGVVVMVTGVLG) threads the bilayer. At 79–91 (CCATFKERRNLLR) the chain is on the cytoplasmic side. A helical transmembrane segment spans residues 92-112 (LYFILLLIIFLLEIIAGILAY). The Extracellular portion of the chain corresponds to 113–221 (VYYQQLNTEL…LETFIQEHLR (109 aa)). A glycan (N-linked (GlcNAc...) asparagine) is linked at N159. Residues 222-242 (VIGAVGIGIACVQVFGMIFTC) form a helical membrane-spanning segment. S-palmitoyl cysteine attachment occurs at residues C242 and C243. Residues 243 to 253 (CLYRSLKLEHY) are Cytoplasmic-facing.

It belongs to the tetraspanin (TM4SF) family. As to quaternary structure, interacts with integrins ITGA3:ITGB1, ITGA5:ITGB1, ITGA3:ITGB1 and ITGA6:ITGB4 and with CD9 and CD181. Interacts (via the second extracellular domain) with integrin ITGAV:ITGB3. Interacts with ITGA3; this interaction modulates ITGA3 glycosylation pattern. Interacts with F11R. Interacts with RAC1 and CDC42; these interactions mediate physical association of RAC1 and CDC42 with integrin adhesion receptor complexes. Post-translationally, palmitoylated. Palmitoylation by ZDHHC2 regulates CD151 expression, association with other tetraspanin family proteins and function in cell adhesion. Ubiquitinated by RNF128 on lysine residues present in the tetraspanin amino terminus via 'Lys-48'-linked ubiquitin leading to proteasomal degradation.

The protein localises to the cell membrane. In terms of biological role, structural component of specialized membrane microdomains known as tetraspanin-enriched microdomains (TERMs), which act as platforms for receptor clustering and signaling. Plays a role in various cellular and molecular mechanism through its association with both integrin and non-integrin proteins. These interactions facilitate critical cellular functions, including cell-to-cell communication, wound healing, platelet aggregation, trafficking, cell motility, and angiogenesis. Via interaction with JAM-A/F11R and integrin ITGA3:ITGB1, promotes the recruitment of signaling molecules such as RAC1, CDC42 and RhoGTPases to facilitate the polarization of epithelial cells and the reorganization of the actin cytoskeleton, which are critical steps in cell migration process. Regulates the glycosylation pattern of ITGA3:ITGB1 thereby modulating its activity. Plays an essential role in the maintenance of central laminin-binding integrin ITGA6:ITGB4-containing adhesion complexes. Essential for the proper assembly of the glomerular and tubular basement membranes in kidney. Contributes to T-cell activation by modulating integrin signaling leading to activation of downstream targets PTK2 and MAPK1/MAPK3. This chain is CD151 antigen (Cd151), found in Mus musculus (Mouse).